Here is a 149-residue protein sequence, read N- to C-terminus: uncharacterized protein (149 aa).

This is an uncharacterized protein from Schizosaccharomyces pombe (strain 972 / ATCC 24843) (Fission yeast).